The chain runs to 305 residues: Protoheme IX farnesyltransferase (305 aa).

The next 9 helical transmembrane spans lie at 31 to 51 (VISL…YSVH), 52 to 72 (PFIA…AGAI), 96 to 118 (VIES…FFMA), 123 to 145 (LLAS…IWLK), 151 to 171 (NIVI…AAVS), 179 to 199 (IILF…LALF), 225 to 245 (ILIY…IGMN), 247 to 267 (FIYL…AGSL), and 281 to 301 (FAYS…TNTI).

It belongs to the UbiA prenyltransferase family. Protoheme IX farnesyltransferase subfamily.

It is found in the cell inner membrane. The catalysed reaction is heme b + (2E,6E)-farnesyl diphosphate + H2O = Fe(II)-heme o + diphosphate. Its pathway is porphyrin-containing compound metabolism; heme O biosynthesis; heme O from protoheme: step 1/1. In terms of biological role, converts heme B (protoheme IX) to heme O by substitution of the vinyl group on carbon 2 of heme B porphyrin ring with a hydroxyethyl farnesyl side group. This Rickettsia massiliae (strain Mtu5) protein is Protoheme IX farnesyltransferase.